The sequence spans 100 residues: Small ribosomal subunit protein uS14c (100 aa).

Belongs to the universal ribosomal protein uS14 family. As to quaternary structure, part of the 30S ribosomal subunit.

The protein localises to the plastid. The protein resides in the chloroplast. Functionally, binds 16S rRNA, required for the assembly of 30S particles. This Oltmannsiellopsis viridis (Marine flagellate) protein is Small ribosomal subunit protein uS14c.